The sequence spans 174 residues: Protein PopB (174 aa).

Positions 1–174 (MSHSKIKAGG…EAMKIKDDDD (174 aa)) are disordered. Polar residues predominate over residues 50 to 65 (LNKSNLGSDSQTWTPG). A compositionally biased stretch (low complexity) spans 66–78 (STMVSLKSRSSSS). Residues 79 to 89 (HKPDTGGDTKP) show a composition bias toward basic and acidic residues. Positions 147–161 (IALQRAIQRQTQTRQ) are enriched in low complexity. The span at 162-174 (KMQEAMKIKDDDD) shows a compositional bias: basic and acidic residues.

Its subcellular location is the secreted. Its function is as follows. Probably involved in host-pathogen interactions. The sequence is that of Protein PopB (popB) from Ralstonia nicotianae (strain ATCC BAA-1114 / GMI1000) (Ralstonia solanacearum).